The sequence spans 224 residues: LexA repressor (224 aa).

A DNA-binding region (H-T-H motif) is located at residues 29–49; it reads RAEIARALGFRSPNAAEDHLK. Residues serine 142 and lysine 179 each act as for autocatalytic cleavage activity in the active site.

This sequence belongs to the peptidase S24 family. Homodimer.

It carries out the reaction Hydrolysis of Ala-|-Gly bond in repressor LexA.. In terms of biological role, represses a number of genes involved in the response to DNA damage (SOS response), including recA and lexA. In the presence of single-stranded DNA, RecA interacts with LexA causing an autocatalytic cleavage which disrupts the DNA-binding part of LexA, leading to derepression of the SOS regulon and eventually DNA repair. The sequence is that of LexA repressor from Bordetella petrii (strain ATCC BAA-461 / DSM 12804 / CCUG 43448).